Consider the following 577-residue polypeptide: Arginine--tRNA ligase (577 aa).

The short motif at 122–132 is the 'HIGH' region element; that stretch reads PNVAKEMHVGH.

Belongs to the class-I aminoacyl-tRNA synthetase family. As to quaternary structure, monomer.

It localises to the cytoplasm. It carries out the reaction tRNA(Arg) + L-arginine + ATP = L-arginyl-tRNA(Arg) + AMP + diphosphate. This Edwardsiella ictaluri (strain 93-146) protein is Arginine--tRNA ligase.